Reading from the N-terminus, the 304-residue chain is Porphobilinogen deaminase (304 aa).

Cys239 carries the S-(dipyrrolylmethanemethyl)cysteine modification.

This sequence belongs to the HMBS family. In terms of assembly, monomer. Dipyrromethane is required as a cofactor.

The catalysed reaction is 4 porphobilinogen + H2O = hydroxymethylbilane + 4 NH4(+). Its pathway is porphyrin-containing compound metabolism; protoporphyrin-IX biosynthesis; coproporphyrinogen-III from 5-aminolevulinate: step 2/4. Functionally, tetrapolymerization of the monopyrrole PBG into the hydroxymethylbilane pre-uroporphyrinogen in several discrete steps. The protein is Porphobilinogen deaminase of Brucella ovis (strain ATCC 25840 / 63/290 / NCTC 10512).